A 207-amino-acid polypeptide reads, in one-letter code: Recombination protein RecR (207 aa).

The C4-type zinc finger occupies 62-77; it reads CSRCNTFTEQDVCETC. Residues 85 to 184 enclose the Toprim domain; it reads SVLCVVETPA…KVSRLARGVP (100 aa).

The protein belongs to the RecR family.

Its function is as follows. May play a role in DNA repair. It seems to be involved in an RecBC-independent recombinational process of DNA repair. It may act with RecF and RecO. This Ralstonia nicotianae (strain ATCC BAA-1114 / GMI1000) (Ralstonia solanacearum) protein is Recombination protein RecR.